The sequence spans 200 residues: Non-specific lipid transfer protein GPI-anchored 16 (200 aa).

Residues 1 to 20 (MEGLTLIVVMMSSFMLGGQG) form the signal peptide. Disulfide bonds link C27–C72, C38–C56, C57–C98, and C70–C107. N87 is a glycosylation site (N-linked (GlcNAc...) asparagine). The interval 134 to 182 (SPGASKAAGTTPTQAPAPDTPADGPTGPTTKSGIRPVDQPMQPTGLAQS) is disordered. Low complexity predominate over residues 140 to 163 (AAGTTPTQAPAPDTPADGPTGPTT). The GPI-anchor amidated threonine moiety is linked to residue T177. The propeptide at 178-200 (GLAQSSTSPFLPLLFISLILLNL) is removed in mature form.

It belongs to the plant LTP family. In terms of tissue distribution, expressed in seedlings, preferentially in hypocotyls and roots. Also observed in siliques.

It localises to the cell membrane. Essential protein involved in female gametophyte development. Probable lipid transfer protein. This is Non-specific lipid transfer protein GPI-anchored 16 from Arabidopsis thaliana (Mouse-ear cress).